The chain runs to 570 residues: Glycine--tRNA ligase (570 aa).

R99 and E165 together coordinate substrate. Residues 197–199 (RNE), 207–212 (LRLREF), 324–325 (EC), and 443–446 (GIDR) contribute to the ATP site. Position 212–216 (212–216 (FTQAE)) interacts with substrate. Residue 439 to 443 (EPSFG) participates in substrate binding.

It belongs to the class-II aminoacyl-tRNA synthetase family.

The protein resides in the cytoplasm. The enzyme catalyses tRNA(Gly) + glycine + ATP = glycyl-tRNA(Gly) + AMP + diphosphate. Its function is as follows. Catalyzes the attachment of glycine to tRNA(Gly). The sequence is that of Glycine--tRNA ligase from Thermococcus gammatolerans (strain DSM 15229 / JCM 11827 / EJ3).